The chain runs to 451 residues: Phosphoglucosamine mutase (451 aa).

The Phosphoserine intermediate role is filled by serine 102. Mg(2+)-binding residues include serine 102, aspartate 242, aspartate 244, and aspartate 246. Phosphoserine is present on serine 102.

Belongs to the phosphohexose mutase family. The cofactor is Mg(2+). Activated by phosphorylation.

The catalysed reaction is alpha-D-glucosamine 1-phosphate = D-glucosamine 6-phosphate. Functionally, catalyzes the conversion of glucosamine-6-phosphate to glucosamine-1-phosphate. The protein is Phosphoglucosamine mutase of Staphylococcus aureus (strain Mu3 / ATCC 700698).